The sequence spans 400 residues: Tryptophan synthase beta chain (400 aa).

At Lys-92 the chain carries N6-(pyridoxal phosphate)lysine.

The protein belongs to the TrpB family. As to quaternary structure, tetramer of two alpha and two beta chains. Pyridoxal 5'-phosphate serves as cofactor.

The enzyme catalyses (1S,2R)-1-C-(indol-3-yl)glycerol 3-phosphate + L-serine = D-glyceraldehyde 3-phosphate + L-tryptophan + H2O. It functions in the pathway amino-acid biosynthesis; L-tryptophan biosynthesis; L-tryptophan from chorismate: step 5/5. Functionally, the beta subunit is responsible for the synthesis of L-tryptophan from indole and L-serine. This chain is Tryptophan synthase beta chain, found in Chromobacterium violaceum (strain ATCC 12472 / DSM 30191 / JCM 1249 / CCUG 213 / NBRC 12614 / NCIMB 9131 / NCTC 9757 / MK).